Here is a 275-residue protein sequence, read N- to C-terminus: Pantothenate synthetase (275 aa).

An ATP-binding site is contributed by 26-33; sequence MGNLHDGH. His-33 functions as the Proton donor in the catalytic mechanism. Gln-57 serves as a coordination point for (R)-pantoate. Gln-57 is a binding site for beta-alanine. 144 to 147 contributes to the ATP binding site; the sequence is GKKD. Gln-150 contacts (R)-pantoate. Residues Val-173 and 181–184 each bind ATP; that span reads LSSR.

Belongs to the pantothenate synthetase family. In terms of assembly, homodimer.

It localises to the cytoplasm. It carries out the reaction (R)-pantoate + beta-alanine + ATP = (R)-pantothenate + AMP + diphosphate + H(+). The protein operates within cofactor biosynthesis; (R)-pantothenate biosynthesis; (R)-pantothenate from (R)-pantoate and beta-alanine: step 1/1. Its function is as follows. Catalyzes the condensation of pantoate with beta-alanine in an ATP-dependent reaction via a pantoyl-adenylate intermediate. This Azoarcus sp. (strain BH72) protein is Pantothenate synthetase.